We begin with the raw amino-acid sequence, 229 residues long: Rhamnosyl O-methyltransferase (229 aa).

Positions 1 to 23 are cleaved as a signal peptide; sequence MERVRQMFSCVSGMIYRPTDSIA.

Belongs to the rhamnosyl O-methyltransferase family.

Functionally, catalyzes the O-methylation of the hydroxyl group located on C-2 of the first rhamnosyl residue linked to the phenolic group of glycosylated phenolphthiocerol dimycocerosates (PGL) and p-hydroxybenzoic acid derivatives (p-HBAD). The protein is Rhamnosyl O-methyltransferase of Mycobacterium leprae (strain TN).